The chain runs to 603 residues: MRTDYCGLIDTRYLDQTVTVKGWVHRRRDHGGVIFIDLRDREGLVQVVIDPDTPEAFATADSARNEFVLSITGRVRRRPEGTTNAKMISGEIELLAKEIEILNAAATPPFQIDDENLSETVRLTNRVIDLRRPAMQKNLRLRYQVAMGVRRYLDAQGFIDIETPMLTRSTPEGARDYLVPSRVHPGEFFALPQSPQLFKQLLMVAGFDRYYQIVKCFRDEDLRADRQPEFTQIDLETSFLNEDDIMDITEGMARQVFHDAMDVELGDFPRMTYADAMHYYGSDKPDLRVSLKFAELTDVMKDVPFKVFNAAANLPNGRVVALRVPGGAKLSRKEIDEYTQFVGIYGAKGLAYIKVNDVSKLTTDETSGLQSPIVKNLTEGVLKSIVERTGAENGDIIFFGADKAKVVNEAIGALRIRIGHEHGEAGGYFVREWRPLWVVDFPMFEYDEDDDRWTACHHPFTSPKPGHEDLMATDPGACIARAYDMVLNGWEIGGGSIRIHRADVQEKVFGALKISPEEQQNKFGFLLDNLKFGAPPHGGLAFGLDRLVTLMAGADSIRDVIAFPKTQRAQCLLTNAPNAVDEKQLKELSLRLRQKADVAGGAA.

An L-aspartate-binding site is contributed by Glu172. Residues 196-199 (QLFK) form an aspartate region. An L-aspartate-binding site is contributed by Arg218. Residues 218 to 220 (RDE) and Gln227 each bind ATP. His457 provides a ligand contact to L-aspartate. Position 491 (Glu491) interacts with ATP. Arg498 lines the L-aspartate pocket. Position 543-546 (543-546 (GLDR)) interacts with ATP.

Belongs to the class-II aminoacyl-tRNA synthetase family. Type 1 subfamily. As to quaternary structure, homodimer.

It is found in the cytoplasm. The catalysed reaction is tRNA(Asx) + L-aspartate + ATP = L-aspartyl-tRNA(Asx) + AMP + diphosphate. Aspartyl-tRNA synthetase with relaxed tRNA specificity since it is able to aspartylate not only its cognate tRNA(Asp) but also tRNA(Asn). Reaction proceeds in two steps: L-aspartate is first activated by ATP to form Asp-AMP and then transferred to the acceptor end of tRNA(Asp/Asn). In Laribacter hongkongensis (strain HLHK9), this protein is Aspartate--tRNA(Asp/Asn) ligase.